A 194-amino-acid polypeptide reads, in one-letter code: Exopolysaccharide II synthesis transcriptional activator ExpG (194 aa).

The 136-residue stretch at 49 to 184 (YFELARVMER…AFQTLHRLEL (136 aa)) folds into the HTH marR-type domain.

Functionally, transcriptional activator of genes for galactoglucan synthesis (exopolysaccharide II or EPS II). This chain is Exopolysaccharide II synthesis transcriptional activator ExpG (expG), found in Rhizobium meliloti (strain 1021) (Ensifer meliloti).